Here is a 568-residue protein sequence, read N- to C-terminus: Periplasmic pectate lyase (568 aa).

A signal peptide spans 1-19 (MKRFALSLLAGLVALQASA).

The protein belongs to the polysaccharide lyase 2 family.

It localises to the periplasm. It catalyses the reaction Eliminative cleavage of (1-&gt;4)-alpha-D-galacturonan to give oligosaccharides with 4-deoxy-alpha-D-galact-4-enuronosyl groups at their non-reducing ends.. It functions in the pathway glycan metabolism; pectin degradation; 2-dehydro-3-deoxy-D-gluconate from pectin: step 2/5. The polypeptide is Periplasmic pectate lyase (pelB) (Pectobacterium carotovorum subsp. carotovorum (Erwinia carotovora subsp. carotovora)).